A 713-amino-acid chain; its full sequence is Polyribonucleotide nucleotidyltransferase (713 aa).

Residues Asp494 and Asp500 each contribute to the Mg(2+) site. One can recognise a KH domain in the interval 561–623; that stretch reads PSFSTMTIPK…EAVQSAEKRV (63 aa). Residues 633–702 enclose the S1 motif domain; it reads GDVYQGTVKS…KSGKYKLSRK (70 aa).

This sequence belongs to the polyribonucleotide nucleotidyltransferase family. Mg(2+) serves as cofactor.

It localises to the cytoplasm. The enzyme catalyses RNA(n+1) + phosphate = RNA(n) + a ribonucleoside 5'-diphosphate. In terms of biological role, involved in mRNA degradation. Catalyzes the phosphorolysis of single-stranded polyribonucleotides processively in the 3'- to 5'-direction. The chain is Polyribonucleotide nucleotidyltransferase from Amoebophilus asiaticus (strain 5a2).